The chain runs to 544 residues: CTP synthase (544 aa).

The tract at residues 1-266 (MKKRFIFITG…DQIICHHFKL (266 aa)) is amidoligase domain. CTP is bound at residue Ser14. Ser14 contributes to the UTP binding site. ATP contacts are provided by residues 15–20 (SLGKGI) and Asp72. The Mg(2+) site is built by Asp72 and Glu140. Residues 147 to 149 (DIE), 187 to 192 (KTKPTQ), and Lys223 each bind CTP. UTP-binding positions include 187 to 192 (KTKPTQ) and Lys223. The Glutamine amidotransferase type-1 domain maps to 291–541 (TIGIIGKYIK…IKAAIQYKKI (251 aa)). Gly352 contributes to the L-glutamine binding site. Cys379 acts as the Nucleophile; for glutamine hydrolysis in catalysis. Residues 380 to 383 (LGMQ), Glu403, and Arg469 each bind L-glutamine. Catalysis depends on residues His514 and Glu516.

The protein belongs to the CTP synthase family. In terms of assembly, homotetramer.

It catalyses the reaction UTP + L-glutamine + ATP + H2O = CTP + L-glutamate + ADP + phosphate + 2 H(+). The catalysed reaction is L-glutamine + H2O = L-glutamate + NH4(+). The enzyme catalyses UTP + NH4(+) + ATP = CTP + ADP + phosphate + 2 H(+). It functions in the pathway pyrimidine metabolism; CTP biosynthesis via de novo pathway; CTP from UDP: step 2/2. Allosterically activated by GTP, when glutamine is the substrate; GTP has no effect on the reaction when ammonia is the substrate. The allosteric effector GTP functions by stabilizing the protein conformation that binds the tetrahedral intermediate(s) formed during glutamine hydrolysis. Inhibited by the product CTP, via allosteric rather than competitive inhibition. Catalyzes the ATP-dependent amination of UTP to CTP with either L-glutamine or ammonia as the source of nitrogen. Regulates intracellular CTP levels through interactions with the four ribonucleotide triphosphates. The polypeptide is CTP synthase (Buchnera aphidicola subsp. Baizongia pistaciae (strain Bp)).